The chain runs to 73 residues: Large ribosomal subunit protein uL24 (73 aa).

Residues 51–65 (DDNPKGGFIHKEKPM) are compositionally biased toward basic and acidic residues. Residues 51-73 (DDNPKGGFIHKEKPMHISNVKKA) form a disordered region.

The protein belongs to the universal ribosomal protein uL24 family. As to quaternary structure, part of the 50S ribosomal subunit.

In terms of biological role, one of two assembly initiator proteins, it binds directly to the 5'-end of the 23S rRNA, where it nucleates assembly of the 50S subunit. Its function is as follows. One of the proteins that surrounds the polypeptide exit tunnel on the outside of the subunit. The chain is Large ribosomal subunit protein uL24 from Helicobacter acinonychis (strain Sheeba).